The following is a 208-amino-acid chain: High frequency lysogenization protein HflD homolog (208 aa).

Belongs to the HflD family.

It is found in the cytoplasm. Its subcellular location is the cell inner membrane. The polypeptide is High frequency lysogenization protein HflD homolog (Yersinia enterocolitica serotype O:8 / biotype 1B (strain NCTC 13174 / 8081)).